Consider the following 442-residue polypeptide: MFGYSMVQMVRANAHKLDWPLRETVLQLYKPFKWTPCFLHKFFETKLQNRKKMSVIIEFEEGCHETGFQMAGEVLQKEKRSKLKSRFNKINCCSAEVTPSALHSLLSECSNIRKVYLNREVKALLDTATEASHAKEVVRNGQTLTGKGVTVAVVDTGIYPHPDLEGRIIGFADMVNQKTEPYDDNGHGTHCAGDVASSGASSSGQYRGPAPEANLIGVKVLNKQGSGTLADIIEGVEWCIQYNEDNPDEPIDIMSMSLGGDALRYDHEQEDPLVRAVEEAWSAGIVVCVAAGNSGPDSQTIASPGVSEKVITVGALDDNNTASSDDDTVASFSSRGPTVYGKEKPDILAPGVNIISLRSPNSYIDKLQKSSRVGSQYFTMSGTSMATPICAGIAALILQQNPDLTPDEVKELLKNGTDKWKDEDPNIYGAGAVNAENSVPGQ.

Residues 122–439 enclose the Peptidase S8 domain; that stretch reads KALLDTATEA…AGAVNAENSV (318 aa). Catalysis depends on charge relay system residues D155 and H187. A disordered region spans residues 318–337; sequence DNNTASSDDDTVASFSSRGP. S384 serves as the catalytic Charge relay system. Residues 423–442 are disordered; sequence EDPNIYGAGAVNAENSVPGQ.

It belongs to the peptidase S8 family.

The protein resides in the cytoplasm. Its activity is regulated as follows. Is completely inhibited by phenylmethanesulphonylfluoride (PMSF) in vitro. Its function is as follows. Displays serine protease activity. Seems to have a broad substrate specificity. The chain is Serine protease AprX (aprX) from Bacillus subtilis (strain 168).